The following is a 124-amino-acid chain: Small ribosomal subunit protein bS6 (124 aa).

This sequence belongs to the bacterial ribosomal protein bS6 family.

In terms of biological role, binds together with bS18 to 16S ribosomal RNA. The protein is Small ribosomal subunit protein bS6 of Rippkaea orientalis (strain PCC 8801 / RF-1) (Cyanothece sp. (strain PCC 8801)).